The following is a 193-amino-acid chain: Hypoxanthine/guanine phosphoribosyltransferase (193 aa).

Belongs to the purine/pyrimidine phosphoribosyltransferase family. Archaeal HPRT subfamily. Homodimer.

Its subcellular location is the cytoplasm. The enzyme catalyses IMP + diphosphate = hypoxanthine + 5-phospho-alpha-D-ribose 1-diphosphate. It catalyses the reaction GMP + diphosphate = guanine + 5-phospho-alpha-D-ribose 1-diphosphate. The protein operates within purine metabolism; IMP biosynthesis via salvage pathway; IMP from hypoxanthine: step 1/1. Functionally, catalyzes a salvage reaction resulting in the formation of IMP that is energically less costly than de novo synthesis. The polypeptide is Hypoxanthine/guanine phosphoribosyltransferase (Methanothermobacter thermautotrophicus (strain ATCC 29096 / DSM 1053 / JCM 10044 / NBRC 100330 / Delta H) (Methanobacterium thermoautotrophicum)).